Consider the following 738-residue polypeptide: NAD(P)H-quinone oxidoreductase subunit 5, chloroplastic (738 aa).

17 helical membrane passes run 9 to 29, 39 to 59, 89 to 109, 125 to 145, 147 to 167, 185 to 205, 219 to 239, 258 to 278, 280 to 300, 327 to 347, 354 to 374, 396 to 416, 425 to 445, 542 to 562, 610 to 630, 691 to 711, and 717 to 737; these read WVIP…LFLI, IWAF…LHLS, VDPL…LVLI, FVYI…SNLI, IYFF…FWFT, GDFG…SLEF, NGIN…GAVA, TPIS…FLLA, LLPL…VGTI, LGYM…FHLI, ALLF…VGYS, TTFL…CFWS, WLYS…TAFY, LFPL…GIPF, SLAI…YSFF, GVID…GEEI, and GRIS…LFFI.

This sequence belongs to the complex I subunit 5 family. In terms of assembly, NDH is composed of at least 16 different subunits, 5 of which are encoded in the nucleus.

It is found in the plastid. Its subcellular location is the chloroplast thylakoid membrane. It catalyses the reaction a plastoquinone + NADH + (n+1) H(+)(in) = a plastoquinol + NAD(+) + n H(+)(out). It carries out the reaction a plastoquinone + NADPH + (n+1) H(+)(in) = a plastoquinol + NADP(+) + n H(+)(out). Its function is as follows. NDH shuttles electrons from NAD(P)H:plastoquinone, via FMN and iron-sulfur (Fe-S) centers, to quinones in the photosynthetic chain and possibly in a chloroplast respiratory chain. The immediate electron acceptor for the enzyme in this species is believed to be plastoquinone. Couples the redox reaction to proton translocation, and thus conserves the redox energy in a proton gradient. The sequence is that of NAD(P)H-quinone oxidoreductase subunit 5, chloroplastic (ndhF) from Sorghum bicolor (Sorghum).